Consider the following 177-residue polypeptide: MLGSLSKDAVAKSLVSRLGKKNVMQVPRVVKVCLNMGIGISAADSKVMDSCTRDLAMISAQKPVVTRARKSIAGFKIRKGFPIGCMVTLRGKRMYEFLDRLINIALPRERDFRGLSTSQLDGHGNISFGIKEHISFLEVDYDKIDKVRGLDVVIVTTATNDADAKALLLELGFPFMN.

The protein belongs to the universal ribosomal protein uL5 family. Part of the 50S ribosomal subunit; part of the 5S rRNA/L5/L18/L25 subcomplex. Contacts the 5S rRNA and the P site tRNA. Forms a bridge to the 30S subunit in the 70S ribosome.

Its function is as follows. This is one of the proteins that bind and probably mediate the attachment of the 5S RNA into the large ribosomal subunit, where it forms part of the central protuberance. In the 70S ribosome it contacts protein S13 of the 30S subunit (bridge B1b), connecting the 2 subunits; this bridge is implicated in subunit movement. Contacts the P site tRNA; the 5S rRNA and some of its associated proteins might help stabilize positioning of ribosome-bound tRNAs. The sequence is that of Large ribosomal subunit protein uL5 from Anaplasma phagocytophilum (strain HZ).